A 60-amino-acid chain; its full sequence is Large ribosomal subunit protein uL30 (60 aa).

It belongs to the universal ribosomal protein uL30 family. Part of the 50S ribosomal subunit.

The protein is Large ribosomal subunit protein uL30 of Thermus thermophilus (strain ATCC BAA-163 / DSM 7039 / HB27).